Reading from the N-terminus, the 93-residue chain is Putative septation protein SpoVG (93 aa).

Belongs to the SpoVG family.

Could be involved in septation. In Fusobacterium nucleatum subsp. nucleatum (strain ATCC 25586 / DSM 15643 / BCRC 10681 / CIP 101130 / JCM 8532 / KCTC 2640 / LMG 13131 / VPI 4355), this protein is Putative septation protein SpoVG.